The primary structure comprises 258 residues: ADP-ribose glycohydrolase MACROD1 (258 aa).

N6-succinyllysine occurs at positions 29, 36, and 62. A Glycyl lysine isopeptide (Lys-Gly) (interchain with G-Cter in SUMO2) cross-link involves residue lysine 71. The 182-residue stretch at 74 to 255 (NPKYKKDKQL…IYQERLPHYF (182 aa)) folds into the Macro domain. 92–94 (GDI) is a substrate binding site. Lysine 96 is subject to N6-acetyllysine. Substrate-binding positions include 105–107 (AAN), 112–117 (GGGGVD), 200–206 (ISTGVFG), and phenylalanine 239.

It belongs to the MacroD-type family. MacroD1/2-like subfamily. In terms of assembly, interacts with ESR1; Interacts in a manner that is estrogen independent but is enhanced by estrogen. Interacts (via macro domain) with AR.

It is found in the nucleus. The catalysed reaction is 3''-O-acetyl-ADP-D-ribose + H2O = ADP-D-ribose + acetate + H(+). It carries out the reaction 2''-O-acetyl-ADP-D-ribose + H2O = ADP-D-ribose + acetate + H(+). It catalyses the reaction 4-O-(ADP-D-ribosyl)-L-aspartyl-[protein] + H2O = L-aspartyl-[protein] + ADP-D-ribose + H(+). The enzyme catalyses 5-O-(ADP-D-ribosyl)-L-glutamyl-[protein] + H2O = L-glutamyl-[protein] + ADP-D-ribose + H(+). The catalysed reaction is alpha-NAD(+) + H2O = ADP-D-ribose + nicotinamide + H(+). Subject to competitive inhibition by the product ADP-ribose. In terms of biological role, removes ADP-ribose from aspartate and glutamate residues in proteins bearing a single ADP-ribose moiety. Inactive towards proteins bearing poly-ADP-ribose. Deacetylates O-acetyl-ADP ribose, a signaling molecule generated by the deacetylation of acetylated lysine residues in histones and other proteins. Plays a role in estrogen signaling. Binds to androgen receptor (AR) and amplifies the transactivation function of AR in response to androgen. May play an important role in carcinogenesis and/or progression of hormone-dependent cancers by feed-forward mechanism that activates ESR1 transactivation. Could be an ESR1 coactivator, providing a positive feedback regulatory loop for ESR1 signal transduction. Could be involved in invasive growth by down-regulating CDH1 in endometrial cancer cells. Enhances ESR1-mediated transcription activity. This chain is ADP-ribose glycohydrolase MACROD1 (Macrod1), found in Rattus norvegicus (Rat).